The primary structure comprises 323 residues: tRNA U34 carboxymethyltransferase (323 aa).

Residues K91, W105, K110, G130, 181–182 (IE), M196, Y200, and R315 each bind carboxy-S-adenosyl-L-methionine.

The protein belongs to the class I-like SAM-binding methyltransferase superfamily. CmoB family. Homotetramer.

It catalyses the reaction carboxy-S-adenosyl-L-methionine + 5-hydroxyuridine(34) in tRNA = 5-carboxymethoxyuridine(34) in tRNA + S-adenosyl-L-homocysteine + H(+). In terms of biological role, catalyzes carboxymethyl transfer from carboxy-S-adenosyl-L-methionine (Cx-SAM) to 5-hydroxyuridine (ho5U) to form 5-carboxymethoxyuridine (cmo5U) at position 34 in tRNAs. In Edwardsiella ictaluri (strain 93-146), this protein is tRNA U34 carboxymethyltransferase.